The sequence spans 1828 residues: Protein TIC 214 (1828 aa).

The next 6 helical transmembrane spans lie at I18 to G38, F64 to M84, P87 to H107, F124 to L144, V172 to I192, and V222 to L242. Basic and acidic residues predominate over residues S270 to Q279. 4 disordered regions span residues S270–L301, D618–R637, E741–K763, and K1533–K1571. Over residues K1550 to K1562 the composition is skewed to basic and acidic residues.

It belongs to the TIC214 family. Part of the Tic complex.

It localises to the plastid. The protein localises to the chloroplast inner membrane. Involved in protein precursor import into chloroplasts. May be part of an intermediate translocation complex acting as a protein-conducting channel at the inner envelope. The protein is Protein TIC 214 of Calycanthus floridus var. glaucus (Eastern sweetshrub).